A 284-amino-acid chain; its full sequence is uncharacterized protein (284 aa).

The span at 1–10 (MSNSVTNFEM) shows a compositional bias: polar residues. Positions 1-28 (MSNSVTNFEMSSVLPGKKPCQGKNNESQ) are disordered.

This is an uncharacterized protein from Escherichia coli (strain K12).